Here is a 206-residue protein sequence, read N- to C-terminus: Glycerol-3-phosphate acyltransferase (206 aa).

A run of 5 helical transmembrane segments spans residues 3–23 (LGWL…SYII), 51–71 (VGPA…AVVV), 83–103 (FAAA…YYGF), 113–133 (IGVL…IAIG), and 162–182 (WFGY…LSMW).

This sequence belongs to the PlsY family. As to quaternary structure, probably interacts with PlsX.

The protein localises to the cell membrane. It carries out the reaction an acyl phosphate + sn-glycerol 3-phosphate = a 1-acyl-sn-glycero-3-phosphate + phosphate. The protein operates within lipid metabolism; phospholipid metabolism. In terms of biological role, catalyzes the transfer of an acyl group from acyl-phosphate (acyl-PO(4)) to glycerol-3-phosphate (G3P) to form lysophosphatidic acid (LPA). This enzyme utilizes acyl-phosphate as fatty acyl donor, but not acyl-CoA or acyl-ACP. This chain is Glycerol-3-phosphate acyltransferase, found in Halalkalibacterium halodurans (strain ATCC BAA-125 / DSM 18197 / FERM 7344 / JCM 9153 / C-125) (Bacillus halodurans).